A 247-amino-acid chain; its full sequence is MSKLFWAMLSFITRLPVPRRWSQGLDFEHYSRGIITFPLIGLLLGAISGLVFMVLQAWCGAPLAALFSVLVLALMTGEFHLDGLADTCDGVFSARSRDRMLEIMRDSRLGTHGGLALIFVVLAKILVLSELALRGEPILASLAAACAVSRGTAALLMYRHRYAREEGLGNVFIGKIDGRQTCVTLGLAAIFAAVLLLGMHGVAAMVVTMVAIFILGQLLKRTLGGQTGDTLGAAIELGELVFLLALL.

5 consecutive transmembrane segments (helical) span residues 34–54 (IITF…VFMV), 57–77 (AWCG…LMTG), 113–133 (GGLA…ELAL), 138–158 (ILAS…LLMY), and 194–214 (VLLL…AIFI).

Belongs to the CobS family. It depends on Mg(2+) as a cofactor.

Its subcellular location is the cell inner membrane. The catalysed reaction is alpha-ribazole + adenosylcob(III)inamide-GDP = adenosylcob(III)alamin + GMP + H(+). It carries out the reaction alpha-ribazole 5'-phosphate + adenosylcob(III)inamide-GDP = adenosylcob(III)alamin 5'-phosphate + GMP + H(+). The protein operates within cofactor biosynthesis; adenosylcobalamin biosynthesis; adenosylcobalamin from cob(II)yrinate a,c-diamide: step 7/7. In terms of biological role, joins adenosylcobinamide-GDP and alpha-ribazole to generate adenosylcobalamin (Ado-cobalamin). Also synthesizes adenosylcobalamin 5'-phosphate from adenosylcobinamide-GDP and alpha-ribazole 5'-phosphate. This Shigella flexneri protein is Adenosylcobinamide-GDP ribazoletransferase.